We begin with the raw amino-acid sequence, 282 residues long: Pantothenate synthetase (282 aa).

An ATP-binding site is contributed by 30 to 37 (MGALHQGH). The active-site Proton donor is H37. Residue Q61 coordinates (R)-pantoate. Q61 provides a ligand contact to beta-alanine. ATP is bound at residue 149–152 (GEKD). Q155 contacts (R)-pantoate. ATP contacts are provided by residues L178 and 186–189 (MSSR).

Belongs to the pantothenate synthetase family. In terms of assembly, homodimer.

It localises to the cytoplasm. It carries out the reaction (R)-pantoate + beta-alanine + ATP = (R)-pantothenate + AMP + diphosphate + H(+). It functions in the pathway cofactor biosynthesis; (R)-pantothenate biosynthesis; (R)-pantothenate from (R)-pantoate and beta-alanine: step 1/1. Catalyzes the condensation of pantoate with beta-alanine in an ATP-dependent reaction via a pantoyl-adenylate intermediate. The chain is Pantothenate synthetase from Flavobacterium psychrophilum (strain ATCC 49511 / DSM 21280 / CIP 103535 / JIP02/86).